A 566-amino-acid chain; its full sequence is Tissue-type plasminogen activator (566 aa).

The first 21 residues, 1–21, serve as a signal peptide directing secretion; the sequence is MMSAMKTEFLCVLLLCGAVFT. Positions 22-33 are excised as a propeptide; that stretch reads SPSQETYRRLRR. Positions 34–36 are cleaved as a propeptide — removed by plasmin; the sequence is GAR. The Fibronectin type-I domain maps to 40-82; sequence VTCRDGKTQMTYRQHDSWLRPLLRGNQVEHCWCDGGRAQCHSV. 17 cysteine pairs are disulfide-bonded: Cys-42–Cys-72, Cys-70–Cys-79, Cys-87–Cys-98, Cys-92–Cys-109, Cys-111–Cys-120, Cys-128–Cys-209, Cys-149–Cys-191, Cys-180–Cys-204, Cys-219–Cys-300, Cys-240–Cys-282, Cys-271–Cys-295, Cys-303–Cys-434, Cys-346–Cys-362, Cys-354–Cys-423, Cys-448–Cys-523, Cys-480–Cys-496, and Cys-513–Cys-541. The tract at residues 43–53 is important for binding to annexin A2; sequence RDGKTQMTYRQ. One can recognise an EGF-like domain in the interval 83–121; sequence PVRSCSEPWCFNGGTCRQALYSSDFVCQCPEGFMGKLCE. 2 consecutive Kringle domains span residues 128-209 and 219-300; these read CYKD…TPAC and CYTG…VPQC. Residue Asn-153 is glycosylated (N-linked (GlcNAc...) asparagine). Residues 315-565 form the Peptidase S1 domain; that stretch reads IKGGLFADIT…YLDWIRDNTR (251 aa). Residues His-361 and Asp-410 each act as charge relay system in the active site. A glycan (N-linked (GlcNAc...) asparagine) is linked at Asn-487. The active-site Charge relay system is the Ser-517.

It belongs to the peptidase S1 family. Heterodimer of chain A and chain B held by a disulfide bond. Binds to fibrin with high affinity. This interaction leads to an increase in the catalytic efficiency of the enzyme due to an increase in affinity for plasminogen. Similarly, binding to heparin increases the activation of plasminogen. Binds to annexin A2, cytokeratin-8, fibronectin and laminin. Binds to mannose receptor and the low-density lipoprotein receptor-related protein (LRP1); these proteins are involved in TPA clearance. Binds LRP1B; binding is followed by internalization and degradation. Forms heterodimer with SERPINA5. Interacts with SERPINE1. In complex with SERPINE1, interacts with SORL1. Post-translationally, the single chain, almost fully active enzyme, can be further processed into a two-chain fully active form by a cleavage after Arg-314 catalyzed by plasmin, tissue kallikrein or factor Xa.

It localises to the secreted. The protein resides in the extracellular space. The catalysed reaction is Specific cleavage of Arg-|-Val bond in plasminogen to form plasmin.. With respect to regulation, inhibited by SERPINA5. Inhibited by SERPINE1. Functionally, converts the abundant, but inactive, zymogen plasminogen to plasmin by hydrolyzing a single Arg-Val bond in plasminogen. By controlling plasmin-mediated proteolysis, it plays an important role in tissue remodeling and degradation, in cell migration and many other physiopathological events. During oocyte activation, plays a role in cortical granule reaction in the zona reaction, which contributes to the block to polyspermy. This Bos taurus (Bovine) protein is Tissue-type plasminogen activator (PLAT).